The chain runs to 207 residues: Calcipressin-like protein (207 aa).

A required for tax-6 interaction region spans residues 176–181 (PAIIVH).

Belongs to the RCAN family. As to quaternary structure, interacts with tax-6 (via catalytic domain); the interaction is calcium-dependent. In terms of tissue distribution, expressed in lateral hypodermal cells, marginal cells of the pharynx, vulva epithelial cells, ventral and dorsal nerve cords and commissures and various neurons in the anterior and posterior regions. Expressed in male tail structures including the diagonal muscles, sensory rays and spicules. Expressed in PHC neurons and most tail neurons and support cells of the phasmid neurons. Also expressed in pharyngeal muscle, head neurons, excretory canal cells and hypodermal seam cells.

Its function is as follows. Inhibits tax-6/calcineurin A phosphatase activity and thereby negatively regulates calcineurin-mediated functions. Plays a role in modulating temperature-dependent calcium responses in AFD neurons and in addition, also negatively regulates thermotaxis in a tax-6-dependent manner in AFD neurons. In response to changes in intracellular calcium levels may also regulate nuclear translocation of transcriptional regulators such as crtc-1. May play a role in regulating body size. Plays a role in male tail tip morphogenesis. The chain is Calcipressin-like protein from Caenorhabditis elegans.